Reading from the N-terminus, the 248-residue chain is MNAIIIIPARLGSTRLPEKMLADIEGEPLIVRTWRQAMQCCRASRVVVATDSVKIAEVLTTYGAEVVMTSPEARCGSERIAEAARQFACDVVVNLQGDEPLISHETIDLALEPFFSPNPPDCSTLVFPLQPDDWAQLHDPNQVKVVLNREGYALYFSRSPIPFQRNQLTSTQCYRHVGLYAFKAEVLQCFAALPPTMLEEAESLEQLRLLEHGYRIRCMVTHDDQPGVNTAEDLELVRTLFKQRHQEA.

The protein belongs to the KdsB family.

Its subcellular location is the cytoplasm. It carries out the reaction 3-deoxy-alpha-D-manno-oct-2-ulosonate + CTP = CMP-3-deoxy-beta-D-manno-octulosonate + diphosphate. It functions in the pathway nucleotide-sugar biosynthesis; CMP-3-deoxy-D-manno-octulosonate biosynthesis; CMP-3-deoxy-D-manno-octulosonate from 3-deoxy-D-manno-octulosonate and CTP: step 1/1. It participates in bacterial outer membrane biogenesis; lipopolysaccharide biosynthesis. Functionally, activates KDO (a required 8-carbon sugar) for incorporation into bacterial lipopolysaccharide in Gram-negative bacteria. This Chlorobium chlorochromatii (strain CaD3) protein is 3-deoxy-manno-octulosonate cytidylyltransferase.